Reading from the N-terminus, the 292-residue chain is Phosphoribulokinase, chromosomal (292 aa).

12–20 (GSSGAGTTS) lines the ATP pocket.

Belongs to the phosphoribulokinase family. In terms of assembly, homooctamer.

It catalyses the reaction D-ribulose 5-phosphate + ATP = D-ribulose 1,5-bisphosphate + ADP + H(+). It functions in the pathway carbohydrate biosynthesis; Calvin cycle. In Cupriavidus necator (strain ATCC 17699 / DSM 428 / KCTC 22496 / NCIMB 10442 / H16 / Stanier 337) (Ralstonia eutropha), this protein is Phosphoribulokinase, chromosomal (cfxP).